A 301-amino-acid chain; its full sequence is Aquaporin-10 (301 aa).

Topologically, residues 1 to 22 (MVFTQAPAEIMGHLRIRSLLAR) are cytoplasmic. A helical membrane pass occupies residues 23-41 (QCLAEFLGVFVLMLLTQGA). The Extracellular segment spans residues 42 to 55 (VAQAVTSGETKGNF). Residues 56-75 (FTMFLAGSLAVTIAIYVGGN) traverse the membrane as a helical segment. At 76 to 77 (VS) the chain is on the cytoplasmic side. An intramembrane region (discontinuously helical) is located at residues 78 to 90 (GAHLNPAFSLAMC). The NPA 1 signature appears at 82-84 (NPA). Over 91–96 (IVGRLP) the chain is Cytoplasmic. Residues 97–121 (WVKLPIYILVQLLSAFCASGATYVL) traverse the membrane as a helical segment. At 122-158 (YHDALQNYTGGNLTVTGPKETASIFATYPAPYLSLNN) the chain is on the extracellular side. Residues N128 and N133 are each glycosylated (N-linked (GlcNAc...) asparagine). Residues 159-176 (GFLDQVLGTGMLIVGLLA) traverse the membrane as a helical segment. Residues 177-188 (ILDRRNKGVPAG) lie on the Cytoplasmic side of the membrane. A helical transmembrane segment spans residues 189–205 (LEPVVVGMLILALGLSM). Over 206–208 (GAN) the chain is Extracellular. The discontinuously helical intramembrane region spans 209 to 223 (CGIPLNPARDLGPRL). Positions 214-216 (NPA) match the NPA 2 motif. Residues 224-241 (FTYVAGWGPEVFSAGNGW) lie on the Extracellular side of the membrane. The helical transmembrane segment at 242 to 262 (WWVPVVAPLVGATVGTATYQL) threads the bilayer. At 263 to 301 (LVALHHPEGPEPAQDLVSAQHKASELETPASAQMLECKL) the chain is on the cytoplasmic side.

This sequence belongs to the MIP/aquaporin (TC 1.A.8) family. Homotetramer; each monomer provides an independent glycerol/water pore. In terms of processing, N-glycosylation at Asn-133 increases the stability of the protein but has no effect on its activity. In terms of tissue distribution, detected in epithelial cells on villi in the ileum, and also in stomach, jejunum, colon, rectum, white adipose tissue and placenta (at protein level). Expressed in duodenum and jejunum. Highest expression in absorptive epithelial cells at the tips of villi in the jejunum. Detected in subcutaneous adipose tissue.

Its subcellular location is the apical cell membrane. The protein resides in the cell membrane. It is found in the lipid droplet. It catalyses the reaction glycerol(in) = glycerol(out). The enzyme catalyses H2O(in) = H2O(out). The catalysed reaction is urea(in) = urea(out). With respect to regulation, glycerol transport is regulated by pH, with the porin being permeable to glycerol at pH 5.5 but not at pH 7.4. Water permeability, however, is not influenced by pH. In terms of biological role, aquaglyceroporins form homotetrameric transmembrane channels, with each monomer independently mediating glycerol and water transport across the plasma membrane along their osmotic gradient. Could also be permeable to urea. Among aquaglyceroporins, it exhibits a unique pH-gated glycerol transport activity, being more active at acidic pH. It most likely plays a central role in the efflux of glycerol formed during triglyceride hydrolysis in adipocytes and in glycerol uptake by enterocytes, as both processes occur and are stimulated at acidic pH. The sequence is that of Aquaporin-10 from Homo sapiens (Human).